The sequence spans 99 residues: uncharacterized protein (99 aa).

It belongs to the ycf15 family.

The protein resides in the plastid. It localises to the chloroplast. This is an uncharacterized protein from Saccharum hybrid (Sugarcane).